Reading from the N-terminus, the 296-residue chain is Cutinase est1 (296 aa).

Residues 1–35 form the signal peptide; sequence MSVTTPRREASLLSRAVAVAAAAAATVALAAPAQA. Positions 36–57 are disordered; that stretch reads ANPYERGPNPTESMLEARSGPF. Tyrosine 95 lines the poly(ethylene terephthalate) pocket. Residue serine 165 is the Nucleophile of the active site. The poly(ethylene terephthalate) site is built by methionine 166 and tryptophan 190. Active-site charge relay system residues include aspartate 211 and histidine 243. A disulfide bridge links cysteine 276 with cysteine 294.

It belongs to the AB hydrolase superfamily. Monomer.

Its subcellular location is the secreted. It localises to the periplasm. The catalysed reaction is (ethylene terephthalate)(n) + H2O = (ethylene terephthalate)(n-1) + 4-[(2-hydroxyethoxy)carbonyl]benzoate + H(+). The enzyme catalyses a butanoate ester + H2O = an aliphatic alcohol + butanoate + H(+). It catalyses the reaction cutin + H2O = cutin monomers.. In terms of biological role, catalyzes the hydrolysis of cutin, a polyester that forms the structure of plant cuticle. Shows esterase activity towards p-nitrophenol-linked aliphatic esters (pNP-aliphatic esters). Capable of degrading the plastic poly(ethylene terephthalate) (PET), the most abundant polyester plastic in the world. Can also depolymerize the synthetic polyester poly(epsilon-caprolactone) (PCL). This chain is Cutinase est1, found in Thermobifida alba (Thermomonospora alba).